We begin with the raw amino-acid sequence, 118 residues long: Small ribosomal subunit protein uS13 (118 aa).

A disordered region spans residues 94 to 118; it reads GLPVRGQRTKTNARTRKGPRKPIKK.

This sequence belongs to the universal ribosomal protein uS13 family. Part of the 30S ribosomal subunit. Forms a loose heterodimer with protein S19. Forms two bridges to the 50S subunit in the 70S ribosome.

Located at the top of the head of the 30S subunit, it contacts several helices of the 16S rRNA. In the 70S ribosome it contacts the 23S rRNA (bridge B1a) and protein L5 of the 50S subunit (bridge B1b), connecting the 2 subunits; these bridges are implicated in subunit movement. Contacts the tRNAs in the A and P-sites. This Mannheimia succiniciproducens (strain KCTC 0769BP / MBEL55E) protein is Small ribosomal subunit protein uS13.